The following is a 469-amino-acid chain: A-type ATP synthase subunit B 3 (469 aa).

Belongs to the ATPase alpha/beta chains family. Has multiple subunits with at least A(3), B(3), C, D, E, F, H, I and proteolipid K(x).

The protein localises to the cell membrane. In terms of biological role, component of the A-type ATP synthase that produces ATP from ADP in the presence of a proton gradient across the membrane. The B chain is a regulatory subunit. This chain is A-type ATP synthase subunit B 3, found in Methanospirillum hungatei JF-1 (strain ATCC 27890 / DSM 864 / NBRC 100397 / JF-1).